An 865-amino-acid chain; its full sequence is V-type proton ATPase 116 kDa subunit a 3 (865 aa).

The Cytoplasmic segment spans residues 1-409 (MGSIYRSEHM…VNPAPWTIIS (409 aa)). A coiled-coil region spans residues 51-121 (FVNEVRRCDE…NKNCKVLKNN (71 aa)). The helical transmembrane segment at 410-430 (FPFLFAVMFGDAGHGIIMLIA) threads the bilayer. Residues 431–453 (ASAFVIFEKKLISMKIKDEIFNT) are Extracellular-facing. The helical transmembrane segment at 454 to 474 (FFGGRYVVLLMGMFAIYTGFI) threads the bilayer. Topologically, residues 475-556 (YNDFYSKSVN…FLNPMKMKTS (82 aa)) are cytoplasmic. A helical membrane pass occupies residues 557-577 (ILLGISQMAFGIMLSLMNHIG). Asn578 carries N-linked (GlcNAc...) asparagine glycosylation. Over 578–583 (NRSVVD) the chain is Extracellular. Residues 584 to 604 (IVFVFIPQCLFLGCIFVYLCL) traverse the membrane as a helical segment. At 605-623 (QVLMKWIFFYVKPAYIFGR) the chain is on the cytoplasmic side. Residues 624 to 644 (LYPGSNCAPSLLIGLINMFMV) traverse the membrane as a helical segment. The Extracellular portion of the chain corresponds to 645–688 (KSRDASFAHDVGTAAGKEWVIVNGQNVTYTINDQCYLQQWYPNQ). Asn670 and Asn687 each carry an N-linked (GlcNAc...) asparagine glycan. Residues 689–709 (SLVELILLLIAVVSVPVMLLV) form a helical membrane-spanning segment. Over 710 to 798 (KPFYIRWRHS…LTMGGWGGSA (89 aa)) the chain is Cytoplasmic. Residues 799–819 (AITILFYFIFSILSVCILILM) form a helical membrane-spanning segment. Over 820–865 (EGLSAFLHAIRLHWVEFQSKFYGGTGIQFEPFCFTKIIRVYEGLDQ) the chain is Extracellular.

This sequence belongs to the V-ATPase 116 kDa subunit family. As to quaternary structure, V-ATPase is a heteromultimeric enzyme made up of two complexes: the ATP-hydrolytic V1 complex and the proton translocation V0 complex. The V1 complex consists of three catalytic AB heterodimers that form a heterohexamer, three peripheral stalks each consisting of EG heterodimers, one central rotor including subunits D and F, and the regulatory subunits C and H. The proton translocation complex V0 consists of the proton transport subunit a, a ring of proteolipid subunits c9c'', rotary subunit d, subunits e and f, and the accessory subunits vah-19/Ac45 and vah-20/PRR. Interacts with V-type proton ATPase subunit C vha-11.

It is found in the apical cell membrane. Its function is as follows. Subunit of the V0 complex of vacuolar(H+)-ATPase (V-ATPase), a multisubunit enzyme composed of a peripheral complex (V1) that hydrolyzes ATP and a membrane integral complex (V0) that translocates protons. V-ATPase is responsible for acidifying and maintaining the pH of intracellular compartments and in some cell types, is targeted to the plasma membrane, where it is responsible for acidifying the extracellular environment. In the intestine, required for the rhythmic defecation behavior by promoting acidification in the gut lumen following defecation. Also, luminal acidification is required for nutrient uptake. The protein is V-type proton ATPase 116 kDa subunit a 3 of Caenorhabditis elegans.